The following is a 433-amino-acid chain: 26S proteasome regulatory subunit 7 (433 aa).

Residues M1 to I22 are disordered. A compositionally biased stretch (basic and acidic residues) spans D8–I22. K116 is subject to N6-acetyllysine. Residue G216–T223 coordinates ATP. The residue at position 422 (K422) is an N6-acetyllysine.

It belongs to the AAA ATPase family. As to quaternary structure, component of the 19S proteasome regulatory particle complex. The 26S proteasome consists of a 20S core particle (CP) and two 19S regulatory subunits (RP). The regulatory particle is made of a lid composed of 9 subunits, a base containing 6 ATPases including PSMC2 and few additional components. Interacts with NDC80 and SQSTM1. Interacts with PAAF1. Interacts with TRIM5. Post-translationally, monoubiquitinated by RNF181. In terms of processing, phosphorylated. Dephosphorylated by UBLCP1 which impairs PSMC2 ATPase activity and disrupts 26S proteasome assembly.

The protein localises to the cytoplasm. Its function is as follows. Component of the 26S proteasome, a multiprotein complex involved in the ATP-dependent degradation of ubiquitinated proteins. This complex plays a key role in the maintenance of protein homeostasis by removing misfolded or damaged proteins, which could impair cellular functions, and by removing proteins whose functions are no longer required. Therefore, the proteasome participates in numerous cellular processes, including cell cycle progression, apoptosis, or DNA damage repair. PSMC2 belongs to the heterohexameric ring of AAA (ATPases associated with diverse cellular activities) proteins that unfolds ubiquitinated target proteins that are concurrently translocated into a proteolytic chamber and degraded into peptides. This Rattus norvegicus (Rat) protein is 26S proteasome regulatory subunit 7 (Psmc2).